The primary structure comprises 63 residues: Large ribosomal subunit protein uL29 (63 aa).

It belongs to the universal ribosomal protein uL29 family.

The protein is Large ribosomal subunit protein uL29 of Mannheimia succiniciproducens (strain KCTC 0769BP / MBEL55E).